A 419-amino-acid chain; its full sequence is Phospho-N-acetylmuramoyl-pentapeptide-transferase (419 aa).

10 helical membrane-spanning segments follow: residues 22 to 42, 72 to 92, 99 to 119, 135 to 155, 208 to 228, 238 to 258, 278 to 298, 303 to 323, 328 to 348, and 396 to 416; these read YVSFRSAVAIVLALLLATVIG, TPTMGGLIIIISILIPTLLLA, ILLMIVTTVLLGSLGFLDDYI, IIGQVGLGFIIGIVLYMNPAV, VLFGWILFVCVAVVVVTFISN, GLATGSSAIIGVVLAIFAYVS, LTIFAFAFVGATIGFLWYNAY, FMGDTGSLTLGGIIAVFALII, LLPILCFVFIIEGLSVMIQVF, and KITVRFWLVGIIMAAITIATL.

The protein belongs to the glycosyltransferase 4 family. MraY subfamily. The cofactor is Mg(2+).

The protein resides in the cell inner membrane. It carries out the reaction UDP-N-acetyl-alpha-D-muramoyl-L-alanyl-gamma-D-glutamyl-meso-2,6-diaminopimeloyl-D-alanyl-D-alanine + di-trans,octa-cis-undecaprenyl phosphate = di-trans,octa-cis-undecaprenyl diphospho-N-acetyl-alpha-D-muramoyl-L-alanyl-D-glutamyl-meso-2,6-diaminopimeloyl-D-alanyl-D-alanine + UMP. It functions in the pathway cell wall biogenesis; peptidoglycan biosynthesis. In terms of biological role, catalyzes the initial step of the lipid cycle reactions in the biosynthesis of the cell wall peptidoglycan: transfers peptidoglycan precursor phospho-MurNAc-pentapeptide from UDP-MurNAc-pentapeptide onto the lipid carrier undecaprenyl phosphate, yielding undecaprenyl-pyrophosphoryl-MurNAc-pentapeptide, known as lipid I. The protein is Phospho-N-acetylmuramoyl-pentapeptide-transferase of Porphyromonas gingivalis (strain ATCC BAA-308 / W83).